Reading from the N-terminus, the 216-residue chain is MARSKTSHNWLKEHFDDKYVKMAQKDGYRSRASYKLLEIQEKDKLIRPGMTVIDLGAAPGGWSQVTSRLIGGQGRLIASDILEMDSIPDVTFIQGDFTEDKILEQILEAVGNTQVDLVISDMAPNMSGLSAVDMPRAMFLCELALDLAGRVLRPGGDFLIKVFQGEGFDVYHKDIRKLFDKVQMRKPSSSRDRSREQYLLARGFRGIDGAASIERF.

Glycine 60, tryptophan 62, aspartate 80, aspartate 96, and aspartate 121 together coordinate S-adenosyl-L-methionine. Residue lysine 161 is the Proton acceptor of the active site.

The protein belongs to the class I-like SAM-binding methyltransferase superfamily. RNA methyltransferase RlmE family.

The protein localises to the cytoplasm. The catalysed reaction is uridine(2552) in 23S rRNA + S-adenosyl-L-methionine = 2'-O-methyluridine(2552) in 23S rRNA + S-adenosyl-L-homocysteine + H(+). Functionally, specifically methylates the uridine in position 2552 of 23S rRNA at the 2'-O position of the ribose in the fully assembled 50S ribosomal subunit. In Pseudomonas savastanoi pv. phaseolicola (strain 1448A / Race 6) (Pseudomonas syringae pv. phaseolicola (strain 1448A / Race 6)), this protein is Ribosomal RNA large subunit methyltransferase E.